Consider the following 101-residue polypeptide: Secreted RxLR effector protein 64 (101 aa).

The N-terminal stretch at 1–23 (MMSPPMTTTLMFILNYAIISFHG) is a signal peptide. A RxLR motif is present at residues 48 to 51 (RELR). Residues 67–87 (LQPILPLPLCLPFPLVPASIF) form a helical membrane-spanning segment.

This sequence belongs to the RxLR effector family.

It is found in the secreted. The protein resides in the host cytoplasm. The protein localises to the host nucleus. It localises to the membrane. Effector that acts as a broad suppressor of cell death to interrupt plant immunity. Inhibits cell death induced by cell death-inducing proteins, including the PAMP elicitor INF1 from P.infestans. This is Secreted RxLR effector protein 64 from Plasmopara viticola (Downy mildew of grapevine).